The following is a 324-amino-acid chain: MTNSDWMPTASISQLKQRATLLRQIREFFAERNVLEVETPAMSHATVTDIHLHTFKTEFVGPGYAKGSALHLMTSPEFHMKRLLAAGSGCIYQLGKAFRNEENGRYHNPEFTMLEWYRIGFDHHALMDEMDALLQLVLRCGSAERMTYQEAFLNVLGVCPLEEEMRELKQVAATLGLSDIAEPEEDRDTLLQLLFSIGIEPKIGQITPAFVYDFPASQAALAKINPADPRVADRFEVYFKGIELANGFHELDNPAEQLARFKADNAKRLEMGLTEQPIDYHLIAALEAGLPECAGVALGIDRLIMLALGEDHIDKVTAFPFPRA.

Substrate is bound at residue Ser75–Glu77. Residues Arg99–Glu101 and Asn108 contribute to the ATP site. Tyr117 is a substrate binding site. Residue Glu243–Leu244 coordinates ATP. Glu250 contacts substrate. Gly299 serves as a coordination point for ATP.

It belongs to the class-II aminoacyl-tRNA synthetase family. EpmA subfamily. In terms of assembly, homodimer.

The catalysed reaction is D-beta-lysine + L-lysyl-[protein] + ATP = N(6)-((3R)-3,6-diaminohexanoyl)-L-lysyl-[protein] + AMP + diphosphate + H(+). In terms of biological role, with EpmB is involved in the beta-lysylation step of the post-translational modification of translation elongation factor P (EF-P). Catalyzes the ATP-dependent activation of (R)-beta-lysine produced by EpmB, forming a lysyl-adenylate, from which the beta-lysyl moiety is then transferred to the epsilon-amino group of a conserved specific lysine residue in EF-P. The protein is Elongation factor P--(R)-beta-lysine ligase of Vibrio cholerae serotype O1 (strain ATCC 39315 / El Tor Inaba N16961).